The chain runs to 185 residues: Dehydrin ERD14 (185 aa).

Composition is skewed to basic and acidic residues over residues 1 to 13, 25 to 45, 52 to 78, and 103 to 134; these read MAEE…EQEV, VTDR…KPEE, FEQK…HRSD, and KPTT…KPED. Disordered regions lie at residues 1 to 138 and 166 to 185; these read MAEE…GSAV and EKLP…KDKE. At Ala-2 the chain carries N-acetylalanine. At Ser-59 the chain carries Phosphoserine. 2 tandem repeats follow at residues 112-132 and 154-174. The 2 X 21 AA repeats, Lys-rich stretch occupies residues 112–174; sequence EEEKKGFMEK…KEKLPGYHPK (63 aa).

Belongs to the plant dehydrin family. In terms of tissue distribution, in stems, cauline leaves, roots and flowers. Low levels found in maturing seeds. Absent in dry seeds.

Intrinsically disordered protein acting as a chaperone. Prevents heat-induced aggregation and/or inactivation of various substrates. Binds to acidic phospholipid vesicles without affecting membrane fluidity. In Arabidopsis thaliana (Mouse-ear cress), this protein is Dehydrin ERD14 (ERD14).